The sequence spans 372 residues: Lipoyl synthase, mitochondrial (372 aa).

7 residues coordinate [4Fe-4S] cluster: Cys-106, Cys-111, Cys-117, Cys-137, Cys-141, Cys-144, and Ser-352. A Radical SAM core domain is found at 122–341 (EYGTATATIM…EKAGNELGFL (220 aa)).

It belongs to the radical SAM superfamily. Lipoyl synthase family. Requires [4Fe-4S] cluster as cofactor.

It localises to the mitochondrion. It catalyses the reaction [[Fe-S] cluster scaffold protein carrying a second [4Fe-4S](2+) cluster] + N(6)-octanoyl-L-lysyl-[protein] + 2 oxidized [2Fe-2S]-[ferredoxin] + 2 S-adenosyl-L-methionine + 4 H(+) = [[Fe-S] cluster scaffold protein] + N(6)-[(R)-dihydrolipoyl]-L-lysyl-[protein] + 4 Fe(3+) + 2 hydrogen sulfide + 2 5'-deoxyadenosine + 2 L-methionine + 2 reduced [2Fe-2S]-[ferredoxin]. It participates in protein modification; protein lipoylation via endogenous pathway; protein N(6)-(lipoyl)lysine from octanoyl-[acyl-carrier-protein]: step 2/2. Its function is as follows. Catalyzes the radical-mediated insertion of two sulfur atoms into the C-6 and C-8 positions of the octanoyl moiety bound to the lipoyl domains of lipoate-dependent enzymes, thereby converting the octanoylated domains into lipoylated derivatives. In Xenopus laevis (African clawed frog), this protein is Lipoyl synthase, mitochondrial (lias).